We begin with the raw amino-acid sequence, 460 residues long: Elongation factor 1-alpha (460 aa).

G2 carries the n,N,N-trimethylglycine modification. N6,N6-dimethyllysine; alternate is present on K3. K3 carries the post-translational modification N6-methyllysine; alternate. The tr-type G domain maps to 5 to 240; that stretch reads KTHVNLVVIG…DAIEPPVRPS (236 aa). Residues 14–21 form a G1 region; sequence GHVDAGKS. A GTP-binding site is contributed by 14–21; that stretch reads GHVDAGKS. K30 is subject to N6-methyllysine. Positions 70-74 are G2; the sequence is GITID. The residue at position 79 (K79) is an N6,N6,N6-trimethyllysine. The interval 91–94 is G3; sequence DAPG. Residues 91-95 and 153-156 each bind GTP; these read DAPGH and NKMD. The interval 153–156 is G4; it reads NKMD. A G5 region spans residues 192 to 194; sequence SGW. Position 317 is an N6,N6-dimethyllysine; alternate (K317). N6-methyllysine; alternate is present on K317. K391 carries the N6-methyllysine modification.

The protein belongs to the TRAFAC class translation factor GTPase superfamily. Classic translation factor GTPase family. EF-Tu/EF-1A subfamily.

The protein resides in the cytoplasm. This protein promotes the GTP-dependent binding of aminoacyl-tRNA to the A-site of ribosomes during protein biosynthesis. In Yarrowia lipolytica (strain CLIB 122 / E 150) (Yeast), this protein is Elongation factor 1-alpha (TEF).